The primary structure comprises 224 residues: MVKCLIVDDDYKILHYVSQHLEAAQIQTVTQASGESAIAYLANNKVDIAVVDIMMTGMDGFELCQLLKNDYDLPVIMLTARDALSDKERAFVSGTDDYVTKPFEVKELLFRIQAVLRRYQINSQDIIKLGNVTLIQEYMELSVDSKNVNLPTKEFQLLFLLCGQPKHIFTRDTLIERIWGFDYEGDERTIDVHIKRLRHRLNQLKATIEIQTVRGQGYRVITHV.

The region spanning 3–116 is the Response regulatory domain; it reads KCLIVDDDYK…ELLFRIQAVL (114 aa). A 4-aspartylphosphate modification is found at Asp-52. The ompR/PhoB-type DNA-binding region spans 124 to 222; sequence QDIIKLGNVT…VRGQGYRVIT (99 aa).

Post-translationally, phosphorylated by HssS.

The protein localises to the cytoplasm. In terms of biological role, member of the two-component regulatory system HssS/HssR involved in intracellular heme homeostasis and tempering of staphylococcal virulence. Phosphorylated HssR binds to a direct repeat sequence within hrtAB promoter and activates the expression of hrtAB, an efflux pump, in response to extracellular heme, hemin, hemoglobin or blood. This chain is Heme response regulator HssR (hssR), found in Staphylococcus haemolyticus (strain JCSC1435).